Consider the following 686-residue polypeptide: Methionine--tRNA ligase (686 aa).

The short motif at 13-23 (PYANGQIHIGH) is the 'HIGH' region element. Zn(2+) contacts are provided by Cys-144, Cys-147, Cys-157, and Cys-160. The 'KMSKS' region motif lies at 335-339 (KMSKS). Position 338 (Lys-338) interacts with ATP. The region spanning 580-686 (DFAKVDLRVA…EGAVPGMRIG (107 aa)) is the tRNA-binding domain.

This sequence belongs to the class-I aminoacyl-tRNA synthetase family. MetG type 1 subfamily. In terms of assembly, homodimer. Requires Zn(2+) as cofactor.

It is found in the cytoplasm. The catalysed reaction is tRNA(Met) + L-methionine + ATP = L-methionyl-tRNA(Met) + AMP + diphosphate. Its function is as follows. Is required not only for elongation of protein synthesis but also for the initiation of all mRNA translation through initiator tRNA(fMet) aminoacylation. In Cupriavidus necator (strain ATCC 17699 / DSM 428 / KCTC 22496 / NCIMB 10442 / H16 / Stanier 337) (Ralstonia eutropha), this protein is Methionine--tRNA ligase.